A 102-amino-acid polypeptide reads, in one-letter code: ATP-dependent Clp protease adapter protein ClpS (102 aa).

It belongs to the ClpS family. As to quaternary structure, binds to the N-terminal domain of the chaperone ClpA.

Its function is as follows. Involved in the modulation of the specificity of the ClpAP-mediated ATP-dependent protein degradation. The chain is ATP-dependent Clp protease adapter protein ClpS from Nitrosospira multiformis (strain ATCC 25196 / NCIMB 11849 / C 71).